Reading from the N-terminus, the 177-residue chain is Inner membrane protein p22 (177 aa).

At 1-7 (MFNIKMT) the chain is on the intravirion side. Residues 8 to 28 (ISVLLIALIVLLIIILVVFLY) form a helical membrane-spanning segment. Residues 29-177 (YKKQQPPKKV…IALPRNHKHA (149 aa)) are Virion surface-facing.

This sequence belongs to the asfivirus inner membrane protein p22 family.

The protein localises to the virion membrane. It is found in the host cell membrane. This chain is Inner membrane protein p22, found in African swine fever virus (isolate Warthog/Namibia/Wart80/1980) (ASFV).